The primary structure comprises 142 residues: ATP synthase epsilon chain (142 aa).

The protein belongs to the ATPase epsilon chain family. F-type ATPases have 2 components, CF(1) - the catalytic core - and CF(0) - the membrane proton channel. CF(1) has five subunits: alpha(3), beta(3), gamma(1), delta(1), epsilon(1). CF(0) has three main subunits: a, b and c.

The protein resides in the cell inner membrane. Produces ATP from ADP in the presence of a proton gradient across the membrane. In Shewanella putrefaciens (strain CN-32 / ATCC BAA-453), this protein is ATP synthase epsilon chain.